The sequence spans 3460 residues: Reelin (3460 aa).

An N-terminal signal peptide occupies residues 1–25; that stretch reads MERSGWARQTFLLALLLGATLRARA. One can recognise a Reelin domain in the interval 26-190; it reads AAGYYPRFSP…GAPTDVTVHP (165 aa). Residues Cys40 and Cys126 are joined by a disulfide bond. N-linked (GlcNAc...) asparagine glycosylation occurs at Asn140. A disulfide bridge connects residues Cys154 and Cys178. N-linked (GlcNAc...) asparagine glycosylation is found at Asn257, Asn289, and Asn305. A disulfide bridge connects residues Cys539 and Cys580. One copy of the BNR 1 repeat lies at 592–603; it reads EFSTNHGRSWSL. Cysteines 608 and 613 form a disulfide. N-linked (GlcNAc...) asparagine glycosylation occurs at Asn628. The region spanning 670–701 is the EGF-like 1 domain; the sequence is IGPSCLKFCSGRGQCTRHGCKCDPGFSGPACE. 2 disulfide bridges follow: Cys674/Cys684 and Cys691/Cys700. The stretch at 798-809 is one BNR 2 repeat; it reads HYSYDNGITWKL. Cys894 and Cys936 are disulfide-bonded. The stretch at 951 to 962 is one BNR 3 repeat; it reads EYSTNHGLTWHL. Disulfide bonds link Cys967–Cys974, Cys1033–Cys1043, and Cys1050–Cys1059. Residues 1029 to 1060 enclose the EGF-like 2 domain; sequence IGQQCPNMCSGHGSCDHGICRCDQGYQGTECH. The BNR 4 repeat unit spans residues 1156–1167; it reads QYSNNGGIQWHL. Residue Asn1266 is glycosylated (N-linked (GlcNAc...) asparagine). A disulfide bridge connects residues Cys1270 and Cys1309. One copy of the BNR 5 repeat lies at 1322–1333; sequence QYSHDAGMSWFL. The cysteines at positions 1338 and 1347 are disulfide-linked. An EGF-like 3 domain is found at 1408–1441; that stretch reads ISEPCPSYCSGHGDCISGVCFCDLGYTAAQGTCV. The stretch at 1534–1545 is one BNR 6 repeat; sequence QYSNDNGILWHL. N-linked (GlcNAc...) asparagine glycosylation occurs at Asn1599. An intrachain disulfide couples Cys1632 to Cys1672. The stretch at 1685 to 1696 is one BNR 7 repeat; it reads QYSLNNGKDWHL. Cys1701 and Cys1708 are oxidised to a cystine. A glycan (N-linked (GlcNAc...) asparagine) is linked at Asn1749. Residues 1764 to 1795 enclose the EGF-like 4 domain; sequence LASGCPWMCSGRGICDAGRCVCDRGFGGPYCV. Residues 1883-1894 form a BNR 8 repeat; that stretch reads QFSISGGITWHL. A glycan (N-linked (GlcNAc...) asparagine) is linked at Asn1920. The stretch at 2042–2053 is one BNR 9 repeat; sequence EFSRDFGATWHL. Zn(2+) contacts are provided by His2060 and His2073. In terms of domain architecture, EGF-like 5 spans 2128 to 2160; the sequence is IGPQCEEMCNGQGSCINGTKCICDPGYSGPTCK. 3 disulfide bridges follow: Cys2132–Cys2142, Cys2136–Cys2148, and Cys2150–Cys2159. Asn2144 is a glycosylation site (N-linked (GlcNAc...) asparagine). A Zn(2+)-binding site is contributed by Glu2178. The cysteines at positions 2194 and 2234 are disulfide-linked. A BNR 10 repeat occupies 2249 to 2260; sequence QYSLNGGLSWSL. Glu2263 serves as a coordination point for Zn(2+). Residues Asn2268 and Asn2316 are each glycosylated (N-linked (GlcNAc...) asparagine). 3 disulfide bridges follow: Cys2347-Cys2386, Cys2392-Cys2558, and Cys2543-Cys2583. Residues Glu2396, Glu2398, and His2459 each contribute to the Zn(2+) site. The stretch at 2398–2409 is one BNR 11 repeat; it reads EYSVDLGLSWHP. Residues 2477–2508 enclose the EGF-like 6 domain; sequence IGDGCIDMCSGHGRCIQGNCVCDEQWGGLYCD. N-linked (GlcNAc...) asparagine glycosylation is present at Asn2568. 2 BNR repeats span residues 2597–2608 and 2777–2788; these read EYSVNGGITWNL and QYSTDFGVSWNY. Disulfide bonds link Cys2793-Cys2800, Cys2856-Cys2866, Cys2860-Cys2871, Cys2873-Cys2882, and Cys2918-Cys2965. Positions 2852–2883 constitute an EGF-like 7 domain; that stretch reads LGPGCLDNCRGHGDCLREQCICDPGYSGPNCY. The N-linked (GlcNAc...) asparagine glycan is linked to Asn2961. A BNR 14 repeat occupies 2978–2989; sequence DYSTDGGITWTL. Residues Asn3015 and Asn3072 are each glycosylated (N-linked (GlcNAc...) asparagine). One copy of the BNR 15 repeat lies at 3142–3154; the sequence is EYTKDARSDSWQL. Cys3159 and Cys3169 are disulfide-bonded. N-linked (GlcNAc...) asparagine glycosylation occurs at Asn3184. Residues 3227-3259 enclose the EGF-like 8 domain; that stretch reads IGEACPKLCSGHGYCTTGAICICDESFQGDDCS. Intrachain disulfides connect Cys3231/Cys3241, Cys3235/Cys3247, Cys3249/Cys3258, and Cys3295/Cys3345. Residues 3362–3373 form a BNR 16 repeat; it reads QYSVNNGITWHV. Asn3411 and Asn3438 each carry an N-linked (GlcNAc...) asparagine glycan.

The protein belongs to the reelin family. As to quaternary structure, oligomer of disulfide-linked homodimers. Post-translationally, N-glycosylated and to a lesser extent also O-glycosylated. Abundantly produced during brain ontogenesis by the Cajal-Retzius cells and other pioneer neurons located in the telencephalic marginal zone and by granule cells of the external granular layer of the cerebellum. In adult brain, preferentially expressed in GABAergic interneurons of prefrontal cortices, temporal cortex, hippocampus and glutamatergic granule cells of cerebellum. Expression is reduced to about 50% in patients with schizophrenia. Also expressed in fetal and adult liver.

It localises to the secreted. It is found in the extracellular space. The protein localises to the extracellular matrix. Its function is as follows. Extracellular matrix serine protease secreted by pioneer neurons that plays a role in layering of neurons in the cerebral cortex and cerebellum by coordinating cell positioning during neurodevelopment. Regulates microtubule function in neurons and neuronal migration. Binding to the extracellular domains of lipoprotein receptors VLDLR and LRP8/APOER2 induces tyrosine phosphorylation of DAB1 and modulation of TAU phosphorylation. Affects migration of sympathetic preganglionic neurons in the spinal cord, where it seems to act as a barrier to neuronal migration. Enzymatic activity is important for the modulation of cell adhesion. The polypeptide is Reelin (RELN) (Homo sapiens (Human)).